Here is a 298-residue protein sequence, read N- to C-terminus: Diphthine methyl ester synthase (298 aa).

S-adenosyl-L-methionine contacts are provided by residues Leu9, Asp85, Gly88, 113 to 114 (SV), Leu164, Leu222, and His247.

It belongs to the diphthine synthase family.

Its subcellular location is the cytoplasm. It carries out the reaction 2-[(3S)-amino-3-carboxypropyl]-L-histidyl-[translation elongation factor 2] + 4 S-adenosyl-L-methionine = diphthine methyl ester-[translation elongation factor 2] + 4 S-adenosyl-L-homocysteine + 3 H(+). Its pathway is protein modification; peptidyl-diphthamide biosynthesis. In terms of biological role, S-adenosyl-L-methionine-dependent methyltransferase that catalyzes four methylations of the modified target histidine residue in translation elongation factor 2 (EF-2), to form an intermediate called diphthine methyl ester. The four successive methylation reactions represent the second step of diphthamide biosynthesis. This is Diphthine methyl ester synthase (DPH5) from Candida glabrata (strain ATCC 2001 / BCRC 20586 / JCM 3761 / NBRC 0622 / NRRL Y-65 / CBS 138) (Yeast).